The following is a 187-amino-acid chain: Large ribosomal subunit protein uL6 (187 aa).

The protein belongs to the universal ribosomal protein uL6 family. As to quaternary structure, part of the 50S ribosomal subunit.

Its function is as follows. This protein binds to the 23S rRNA, and is important in its secondary structure. It is located near the subunit interface in the base of the L7/L12 stalk, and near the tRNA binding site of the peptidyltransferase center. The protein is Large ribosomal subunit protein uL6 of Chloroflexus aggregans (strain MD-66 / DSM 9485).